The chain runs to 299 residues: Very long chain fatty acid elongase 5 (299 aa).

Methionine 1 is subject to N-acetylmethionine. Helical transmembrane passes span 26 to 46 (WFLL…LLIV), 64 to 84 (ILVV…YELV), 112 to 132 (VLWW…FFIL), 139 to 158 (ITVL…WFVM), 168 to 187 (FGAT…YGLS), 205 to 225 (GQLV…IWPC), and 227 to 247 (FPLG…ALFT).

The protein belongs to the ELO family. ELOVL5 subfamily. As to quaternary structure, interacts with TECR. Highly expressed in lung and brain.

It localises to the endoplasmic reticulum membrane. The protein resides in the cell projection. Its subcellular location is the dendrite. It carries out the reaction a very-long-chain acyl-CoA + malonyl-CoA + H(+) = a very-long-chain 3-oxoacyl-CoA + CO2 + CoA. The enzyme catalyses (6Z,9Z,12Z,15Z)-octadecatetraenoyl-CoA + malonyl-CoA + H(+) = (8Z,11Z,14Z,17Z)-3-oxoicosatetraenoyl-CoA + CO2 + CoA. The catalysed reaction is (6Z,9Z,12Z)-octadecatrienoyl-CoA + malonyl-CoA + H(+) = (8Z,11Z,14Z)-3-oxoeicosatrienoyl-CoA + CO2 + CoA. It catalyses the reaction (5Z,8Z,11Z,14Z,17Z)-eicosapentaenoyl-CoA + malonyl-CoA + H(+) = 3-oxo-(7Z,10Z,13Z,16Z,19Z)-docosapentaenoyl-CoA + CO2 + CoA. It carries out the reaction (5Z,8Z,11Z,14Z)-eicosatetraenoyl-CoA + malonyl-CoA + H(+) = (7Z,10Z,13Z,16Z)-3-oxodocosatetraenoyl-CoA + CO2 + CoA. The enzyme catalyses (9Z,12Z,15Z)-octadecatrienoyl-CoA + malonyl-CoA + H(+) = (11Z,14Z,17Z)-3-oxoeicosatrienoyl-CoA + CO2 + CoA. The catalysed reaction is (9Z)-hexadecenoyl-CoA + malonyl-CoA + H(+) = 3-oxo-(11Z)-octadecenoyl-CoA + CO2 + CoA. It catalyses the reaction (9Z)-octadecenoyl-CoA + malonyl-CoA + H(+) = 3-oxo-(11Z)-eicosenoyl-CoA + CO2 + CoA. It carries out the reaction (11Z)-octadecenoyl-CoA + malonyl-CoA + H(+) = 3-oxo-(13Z)-eicosenoyl-CoA + CO2 + CoA. The enzyme catalyses (9Z,12Z)-octadecadienoyl-CoA + malonyl-CoA + H(+) = (11Z,14Z)-3-oxoicosa-11,14-dienoyl-CoA + CO2 + CoA. It participates in lipid metabolism; polyunsaturated fatty acid biosynthesis. Its function is as follows. Catalyzes the first and rate-limiting reaction of the four reactions that constitute the long-chain fatty acids elongation cycle. This endoplasmic reticulum-bound enzymatic process allows the addition of 2 carbons to the chain of long- and very long-chain fatty acids (VLCFAs) per cycle. Condensing enzyme that acts specifically toward polyunsaturated acyl-CoA with the higher activity toward C18:3(n-6) acyl-CoA. May participate in the production of monounsaturated and of polyunsaturated VLCFAs of different chain lengths that are involved in multiple biological processes as precursors of membrane lipids and lipid mediators. In conditions where the essential linoleic and alpha linoleic fatty acids are lacking it is also involved in the synthesis of Mead acid from oleic acid. The chain is Very long chain fatty acid elongase 5 from Rattus norvegicus (Rat).